Reading from the N-terminus, the 493-residue chain is Chitobiosyldiphosphodolichol beta-mannosyltransferase (493 aa).

Residues 1 to 71 (MNRVAVVVLG…PISMSNSFKK (71 aa)) are Lumenal-facing. A helical transmembrane segment spans residues 72–92 (IPLISIFMWPLLAICKVLFQI). Residues 93 to 109 (IQLMYVLLVKVPSPLNT) lie on the Cytoplasmic side of the membrane. Residues 110 to 130 (ILVQSPPAIPTIFVMQIVCWI) constitute an intramembrane region (helical). Residues 131–493 (RGVHLVIDWH…SSSNSKSKKD (363 aa)) are Cytoplasmic-facing. Residues 462-493 (FIPSSSSSSSSSSSSSSSSSSSSSSNSKSKKD) are disordered. Positions 465-493 (SSSSSSSSSSSSSSSSSSSSSSNSKSKKD) are enriched in low complexity.

Belongs to the glycosyltransferase group 1 family. Glycosyltransferase 33 subfamily.

The protein resides in the endoplasmic reticulum membrane. The catalysed reaction is an N,N'-diacetylchitobiosyl-diphospho-di-trans,poly-cis-dolichol + GDP-alpha-D-mannose = a beta-D-Man-(1-&gt;4)-beta-D-GlcNAc-(1-&gt;4)-alpha-D-GlcNAc-diphospho-di-trans,poly-cis-dolichol + GDP + H(+). It functions in the pathway protein modification; protein glycosylation. Its function is as follows. Participates in the formation of the lipid-linked precursor oligosaccharide for N-glycosylation. Involved in assembling the dolichol-pyrophosphate-GlcNAc(2)-Man(5) intermediate on the cytoplasmic surface of the ER. This chain is Chitobiosyldiphosphodolichol beta-mannosyltransferase (alg1), found in Dictyostelium discoideum (Social amoeba).